The sequence spans 505 residues: Cytochrome P450 76A2 (505 aa).

Cys448 provides a ligand contact to heme.

This sequence belongs to the cytochrome P450 family. Requires heme as cofactor.

The sequence is that of Cytochrome P450 76A2 (CYP76A2) from Solanum melongena (Eggplant).